The chain runs to 333 residues: N-acetyl-gamma-glutamyl-phosphate reductase (333 aa).

Cysteine 136 is a catalytic residue.

This sequence belongs to the NAGSA dehydrogenase family. Type 1 subfamily.

It is found in the cytoplasm. It catalyses the reaction N-acetyl-L-glutamate 5-semialdehyde + phosphate + NADP(+) = N-acetyl-L-glutamyl 5-phosphate + NADPH + H(+). Its pathway is amino-acid biosynthesis; L-arginine biosynthesis; N(2)-acetyl-L-ornithine from L-glutamate: step 3/4. Catalyzes the NADPH-dependent reduction of N-acetyl-5-glutamyl phosphate to yield N-acetyl-L-glutamate 5-semialdehyde. The chain is N-acetyl-gamma-glutamyl-phosphate reductase from Xylella fastidiosa (strain 9a5c).